The chain runs to 351 residues: Phosphoribosylformylglycinamidine cyclo-ligase (351 aa).

Belongs to the AIR synthase family.

Its subcellular location is the cytoplasm. It catalyses the reaction 2-formamido-N(1)-(5-O-phospho-beta-D-ribosyl)acetamidine + ATP = 5-amino-1-(5-phospho-beta-D-ribosyl)imidazole + ADP + phosphate + H(+). Its pathway is purine metabolism; IMP biosynthesis via de novo pathway; 5-amino-1-(5-phospho-D-ribosyl)imidazole from N(2)-formyl-N(1)-(5-phospho-D-ribosyl)glycinamide: step 2/2. The sequence is that of Phosphoribosylformylglycinamidine cyclo-ligase from Burkholderia multivorans (strain ATCC 17616 / 249).